A 165-amino-acid chain; its full sequence is Sulfopyruvate decarboxylase subunit alpha (165 aa).

It belongs to the ComD family. In terms of assembly, heterododecamer composed of 6 subunits alpha and 6 subunits beta.

It carries out the reaction 3-sulfopyruvate + H(+) = sulfoacetaldehyde + CO2. Its pathway is cofactor biosynthesis; coenzyme M biosynthesis; sulfoacetaldehyde from phosphoenolpyruvate and sulfite: step 4/4. Functionally, involved in the biosynthesis of the coenzyme M (2-mercaptoethanesulfonic acid). Catalyzes the decarboxylation of sulfopyruvate to sulfoacetaldehyde. The protein is Sulfopyruvate decarboxylase subunit alpha of Methanothermobacter thermautotrophicus (strain ATCC 29096 / DSM 1053 / JCM 10044 / NBRC 100330 / Delta H) (Methanobacterium thermoautotrophicum).